The primary structure comprises 74 residues: MPLPKISEARELSDERLVEEITAVKKQLFQLRLQKATRQLDKPHQFRHARHRLAQLLTVEGERKRAAATQSPQE.

Belongs to the universal ribosomal protein uL29 family.

The protein is Large ribosomal subunit protein uL29 of Nostoc sp. (strain PCC 7120 / SAG 25.82 / UTEX 2576).